Reading from the N-terminus, the 472-residue chain is Carboxypeptidase Q (472 aa).

The signal sequence occupies residues 1-20 (MKFLLFMFVGVVHLLPLASG). The propeptide occupies 21 to 44 (KAIYGNGPSQRTFQEIKEEIAHYG). 3 N-linked (GlcNAc...) asparagine glycosylation sites follow: Asn-52, Asn-61, and Asn-179. His-290 and Asp-302 together coordinate Zn(2+). Residue Glu-336 is the Nucleophile of the active site. Glu-337 lines the Zn(2+) pocket. N-linked (GlcNAc...) asparagine glycosylation is found at Asn-353 and Asn-356. Asp-364 serves as a coordination point for Zn(2+). Asn-396 carries N-linked (GlcNAc...) asparagine glycosylation. Residue His-434 coordinates Zn(2+).

It belongs to the peptidase M28 family. As to quaternary structure, homodimer. The monomeric form is inactive while the homodimer is active. N-glycosylated. The secreted form is modified by hybrid or complex type oligosaccharide chains.

It localises to the endoplasmic reticulum. The protein localises to the golgi apparatus. Its subcellular location is the lysosome. It is found in the secreted. Functionally, carboxypeptidase that may play an important role in the hydrolysis of circulating peptides. Catalyzes the hydrolysis of dipeptides with unsubstituted terminals into amino acids. May play a role in the liberation of thyroxine hormone from its thyroglobulin (Tg) precursor. The chain is Carboxypeptidase Q (CPQ) from Bos taurus (Bovine).